A 212-amino-acid polypeptide reads, in one-letter code: ATP phosphoribosyltransferase (212 aa).

It belongs to the ATP phosphoribosyltransferase family. Short subfamily. Heteromultimer composed of HisG and HisZ subunits.

The protein localises to the cytoplasm. The catalysed reaction is 1-(5-phospho-beta-D-ribosyl)-ATP + diphosphate = 5-phospho-alpha-D-ribose 1-diphosphate + ATP. Its pathway is amino-acid biosynthesis; L-histidine biosynthesis; L-histidine from 5-phospho-alpha-D-ribose 1-diphosphate: step 1/9. Catalyzes the condensation of ATP and 5-phosphoribose 1-diphosphate to form N'-(5'-phosphoribosyl)-ATP (PR-ATP). Has a crucial role in the pathway because the rate of histidine biosynthesis seems to be controlled primarily by regulation of HisG enzymatic activity. The polypeptide is ATP phosphoribosyltransferase (Clostridium botulinum (strain Langeland / NCTC 10281 / Type F)).